The chain runs to 709 residues: Polyribonucleotide nucleotidyltransferase (709 aa).

2 residues coordinate Mg(2+): aspartate 487 and aspartate 493. The KH domain maps to 554–613 (PRIHTMKISSDKIKDVIGKGGAVIRALCEETGTTIEIEDDGTIKIAATEGAAAKEAIRRI). The S1 motif domain occupies 623–691 (GKIYPGKVMR…RQGRIRLSIK (69 aa)).

This sequence belongs to the polyribonucleotide nucleotidyltransferase family. As to quaternary structure, component of the RNA degradosome, which is a multiprotein complex involved in RNA processing and mRNA degradation. The cofactor is Mg(2+).

The protein resides in the cytoplasm. It carries out the reaction RNA(n+1) + phosphate = RNA(n) + a ribonucleoside 5'-diphosphate. In terms of biological role, involved in mRNA degradation. Catalyzes the phosphorolysis of single-stranded polyribonucleotides processively in the 3'- to 5'-direction. The chain is Polyribonucleotide nucleotidyltransferase from Aliivibrio salmonicida (strain LFI1238) (Vibrio salmonicida (strain LFI1238)).